Consider the following 484-residue polypeptide: Aldehyde dehydrogenase family 3 member A2 (484 aa).

Residues 1-463 (MERQVLRLRQ…FLLKQFNKGR (463 aa)) lie on the Cytoplasmic side of the membrane. Position 185–190 (185–190 (GNTAVG)) interacts with NAD(+). Residues glutamate 207 and cysteine 241 contribute to the active site. Serine 293 is subject to Phosphoserine. The helical transmembrane segment at 464–484 (LGMLLFVCLVAVAAVIVKDQL) threads the bilayer. Residues 481-484 (KDQL) carry the Prevents secretion from ER motif.

The protein belongs to the aldehyde dehydrogenase family. As to quaternary structure, homodimer.

Its subcellular location is the membrane. The protein resides in the microsome membrane. The protein localises to the endoplasmic reticulum membrane. It catalyses the reaction an aldehyde + NAD(+) + H2O = a carboxylate + NADH + 2 H(+). The enzyme catalyses a fatty aldehyde + NAD(+) + H2O = a fatty acid + NADH + 2 H(+). It carries out the reaction hexadecanoate + NADH + 2 H(+) = hexadecanal + NAD(+) + H2O. The catalysed reaction is octanal + NAD(+) + H2O = octanoate + NADH + 2 H(+). It catalyses the reaction (2E)-hexadecenal + NAD(+) + H2O = (E)-hexadec-2-enoate + NADH + 2 H(+). The enzyme catalyses 22-oxodocosanoate + NAD(+) + H2O = docosanedioate + NADH + 2 H(+). It carries out the reaction 2,6,10,14-tetramethylpentadecanal + NAD(+) + H2O = 2,6,10,14-tetramethylpentadecanoate + NADH + 2 H(+). The catalysed reaction is octadecanal + NAD(+) + H2O = octadecanoate + NADH + 2 H(+). It catalyses the reaction dodecanoate + NADH + 2 H(+) = dodecanal + NAD(+) + H2O. The enzyme catalyses decanal + NAD(+) + H2O = decanoate + NADH + 2 H(+). It carries out the reaction tetradecanal + NAD(+) + H2O = tetradecanoate + NADH + 2 H(+). The catalysed reaction is heptanal + NAD(+) + H2O = heptanoate + NADH + 2 H(+). It catalyses the reaction (2E,6E)-farnesal + NAD(+) + H2O = (2E,6E)-farnesoate + NADH + 2 H(+). Its function is as follows. Catalyzes the oxidation of medium and long-chain aliphatic aldehydes to fatty acids. Active on a variety of saturated and unsaturated aliphatic aldehydes between 6 and 24 carbons in length. Responsible for conversion of the sphingosine 1-phosphate (S1P) degradation product hexadecenal to hexadecenoic acid. In Mus musculus (Mouse), this protein is Aldehyde dehydrogenase family 3 member A2 (Aldh3a2).